The chain runs to 572 residues: Pentatricopeptide repeat-containing protein At1g26900, mitochondrial (572 aa).

A mitochondrion-targeting transit peptide spans 1–117 (MTLAITSRLR…RAFSVFNQLR (117 aa)). PPR repeat units lie at residues 89 to 123 (NLFMFNTMIRGYSISDEPERAFSVFNQLRAKGLTL), 124 to 158 (DRFSFITTLKSCSRELCVSIGEGLHGIALRSGFMV), 159 to 189 (FTDLRNALIHFYCVCGKISDARKVFDEMPQS), 191 to 225 (DAVTFSTLMNGYLQVSKKALALDLFRIMRKSEVVV), 226 to 260 (NVSTLLSFLSAISDLGDLSGAESAHVLCIKIGLDL), 261 to 291 (DLHLITALIGMYGKTGGISSARRIFDCAIRK), 292 to 326 (DVVTWNCMIDQYAKTGLLEECVWLLRQMKYEKMKP), 327 to 361 (NSSTFVGLLSSCAYSEAAFVGRTVADLLEEERIAL), 362 to 392 (DAILGTALVDMYAKVGLLEKAVEIFNRMKDK), 393 to 427 (DVKSWTAMISGYGAHGLAREAVTLFNKMEEENCKV), 430 to 460 (NEITFLVVLNACSHGGLVMEGIRCFKRMVEA), and 466 to 496 (KVEHYGCVVDLLGRAGQLEEAYELIRNLPIT). Positions 501-572 (AWRALLAACR…EAGYSAIEIE (72 aa)) are type E motif.

The protein belongs to the PPR family. PCMP-E subfamily.

It is found in the mitochondrion. The sequence is that of Pentatricopeptide repeat-containing protein At1g26900, mitochondrial (PCMP-E54) from Arabidopsis thaliana (Mouse-ear cress).